We begin with the raw amino-acid sequence, 355 residues long: UDP-N-acetylglucosamine--N-acetylmuramyl-(pentapeptide) pyrophosphoryl-undecaprenol N-acetylglucosamine transferase (355 aa).

Residues 15–17 (TGG), N127, R163, S191, I244, 263–268 (ALTVSE), and Q288 each bind UDP-N-acetyl-alpha-D-glucosamine.

The protein belongs to the glycosyltransferase 28 family. MurG subfamily.

It is found in the cell inner membrane. The catalysed reaction is di-trans,octa-cis-undecaprenyl diphospho-N-acetyl-alpha-D-muramoyl-L-alanyl-D-glutamyl-meso-2,6-diaminopimeloyl-D-alanyl-D-alanine + UDP-N-acetyl-alpha-D-glucosamine = di-trans,octa-cis-undecaprenyl diphospho-[N-acetyl-alpha-D-glucosaminyl-(1-&gt;4)]-N-acetyl-alpha-D-muramoyl-L-alanyl-D-glutamyl-meso-2,6-diaminopimeloyl-D-alanyl-D-alanine + UDP + H(+). Its pathway is cell wall biogenesis; peptidoglycan biosynthesis. Its function is as follows. Cell wall formation. Catalyzes the transfer of a GlcNAc subunit on undecaprenyl-pyrophosphoryl-MurNAc-pentapeptide (lipid intermediate I) to form undecaprenyl-pyrophosphoryl-MurNAc-(pentapeptide)GlcNAc (lipid intermediate II). The chain is UDP-N-acetylglucosamine--N-acetylmuramyl-(pentapeptide) pyrophosphoryl-undecaprenol N-acetylglucosamine transferase from Salmonella paratyphi A (strain ATCC 9150 / SARB42).